The chain runs to 283 residues: Glutamate racemase (283 aa).

Substrate-binding positions include 28-29 (DS) and 60-61 (YG). The Proton donor/acceptor role is filled by C92. Residue 93–94 (NT) participates in substrate binding. The Proton donor/acceptor role is filled by C204. 205–206 (TH) serves as a coordination point for substrate.

Belongs to the aspartate/glutamate racemases family.

It carries out the reaction L-glutamate = D-glutamate. The protein operates within cell wall biogenesis; peptidoglycan biosynthesis. Provides the (R)-glutamate required for cell wall biosynthesis. The protein is Glutamate racemase of Salmonella enteritidis PT4 (strain P125109).